A 62-amino-acid chain; its full sequence is U8-theraphotoxin-Cg1a 1 (62 aa).

The N-terminal stretch at 1 to 21 (MKTLVLFIIFGLAALFLLSSA) is a signal peptide. Positions 22–29 (NELEETER) are excised as a propeptide. Intrachain disulfides connect Cys31/Cys46, Cys38/Cys51, and Cys45/Cys58.

The protein belongs to the neurotoxin 10 (Hwtx-1) family. 30 (Jztx-14) subfamily. Expressed by the venom gland.

The protein resides in the secreted. In terms of biological role, probable ion channel inhibitor. This chain is U8-theraphotoxin-Cg1a 1, found in Chilobrachys guangxiensis (Chinese earth tiger tarantula).